A 1553-amino-acid polypeptide reads, in one-letter code: Sterol 3-beta-glucosyltransferase (1553 aa).

2 stretches are compositionally biased toward polar residues: residues 1 to 10 and 25 to 36; these read MASSQPTSSG and LNTETSSSQHRA. Disordered regions lie at residues 1–106 and 189–270; these read MASS…NEED and PASA…GLAP. A compositionally biased stretch (basic and acidic residues) spans 90–100; sequence LPDRLKDNGKE. The span at 211–222 shows a compositional bias: low complexity; the sequence is LLQSVPSLSRLS. The span at 223–232 shows a compositional bias: basic residues; it reads SSHKSKKTKQ. GRAM domains are found at residues 323 to 370 and 464 to 495; these read KKLK…HLPK and SLQR…EEAQ. In terms of domain architecture, PH spans 374–470; sequence EIAKSGYLSK…WVKSLQRVIF (97 aa). Disordered stretches follow at residues 542-569, 611-662, and 805-825; these read SPED…GSPR, FSRR…FDDP, and GKKH…VEDD. The span at 633 to 650 shows a compositional bias: basic and acidic residues; that stretch reads LHGDGRRSFSKPRHEPHA. Residues 651–662 show a composition bias toward polar residues; the sequence is STDSYAQSFDDP. Residues 810-819 show a composition bias toward basic and acidic residues; it reads DHPAGRRTER. In terms of domain architecture, GRAM 3 spans 834–900; sequence ARFQAHFALP…KDIETVDKEK (67 aa). UDP-alpha-D-glucose-binding residues include Ser-1020, Arg-1021, Asp-1023, Ala-1328, His-1330, His-1343, Ser-1346, Gly-1347, Thr-1348, Asp-1367, and Gln-1368. Disordered stretches follow at residues 1446–1504 and 1527–1553; these read KHQS…GSMS and PALG…VKYV. The span at 1466 to 1488 shows a compositional bias: acidic residues; it reads PEDDQGQAAEEDDIDADDEEEES.

It belongs to the glycosyltransferase 28 family.

It is found in the cytoplasm. The protein resides in the preautophagosomal structure membrane. The enzyme catalyses a sterol + UDP-alpha-D-glucose = a sterol 3-beta-D-glucoside + UDP + H(+). It catalyses the reaction ergosterol + UDP-alpha-D-glucose = ergosteryl 3-beta-D-glucoside + UDP + H(+). Its function is as follows. Sterol glycosyltransferase responsible for the glycosylation of ergosterol to form ergosterol-glucoside. This chain is Sterol 3-beta-glucosyltransferase (apg-12), found in Neurospora crassa (strain ATCC 24698 / 74-OR23-1A / CBS 708.71 / DSM 1257 / FGSC 987).